A 286-amino-acid polypeptide reads, in one-letter code: Alpha-ketoglutarate-dependent dioxygenase alkB homolog 3 (286 aa).

The tract at residues 1–38 (MEDKRRRARVQGAWAGPAKSQATAQPAPTAENNLQQRP) is disordered. Polar residues predominate over residues 20–36 (SQATAQPAPTAENNLQQ). Residues Trp115 and 141–143 (YTY) contribute to the substrate site. A Fe2OG dioxygenase domain is found at 172 to 278 (SFNSLLCNLY…RINLTFRTVY (107 aa)). Leu177 carries the (4R)-5-hydroxyleucine; alternate modification. (4R)-5-oxoleucine; alternate is present on Leu177. A 2-oxoglutarate-binding site is contributed by 179 to 181 (NLY). The Fe cation site is built by His191 and Asp193. Asp194 provides a ligand contact to substrate. His257 is a Fe cation binding site. 2-oxoglutarate-binding positions include 269-275 (RINLTFR) and Arg275.

Belongs to the alkB family. As to quaternary structure, interacts with the ASCC complex composed of ASCC1, ASCC2 and ASCC3. Interacts directly with ASCC3, and is thereby recruited to the ASCC complex. Interacts with OTUD4; the interaction is direct. Interacts with USP7 and USP9X. The cofactor is Fe(2+). Ubiquitinated; undergoes 'Lys-48'-linked polyubiquitination. OTUD4 promotes USP7 and USP9X-dependent deubiquitination of 'Lys-48'-polyubiquitinated ALKBH3 promoting the repair of alkylated DNA lesions.

It is found in the nucleus. The protein resides in the cytoplasm. It catalyses the reaction an N(1)-methyladenosine in mRNA + 2-oxoglutarate + O2 = an adenosine in mRNA + formaldehyde + succinate + CO2. It carries out the reaction a methylated nucleobase within DNA + 2-oxoglutarate + O2 = a nucleobase within DNA + formaldehyde + succinate + CO2. The catalysed reaction is an N(1)-methyl-2'-deoxyadenosine in single-stranded DNA + 2-oxoglutarate + O2 = a 2'-deoxyadenosine in single-stranded DNA + formaldehyde + succinate + CO2 + H(+). The enzyme catalyses an N(3)-methyl-2'-deoxycytidine in single-stranded DNA + 2-oxoglutarate + O2 = a 2'-deoxycytidine in single-stranded DNA + formaldehyde + succinate + CO2 + H(+). It catalyses the reaction a 3,N(4)-etheno-2'-deoxycytidine in single-stranded DNA + 2-oxoglutarate + O2 + H2O = a 2'-deoxycytidine in single-stranded DNA + glyoxal + succinate + CO2. Its activity is regulated as follows. Activated by ascorbate. Functionally, dioxygenase that mediates demethylation of DNA and RNA containing 1-methyladenosine (m1A). Repairs alkylated DNA containing 1-methyladenosine (m1A) and 3-methylcytosine (m3C) by oxidative demethylation. Has a strong preference for single-stranded DNA. Able to process alkylated m3C within double-stranded regions via its interaction with ASCC3, which promotes DNA unwinding to generate single-stranded substrate needed for ALKBH3. Can repair exocyclic 3,N4-ethenocytosine adducs in single-stranded DNA. Also acts on RNA. Demethylates N(1)-methyladenosine (m1A) RNA, an epigenetic internal modification of messenger RNAs (mRNAs) highly enriched within 5'-untranslated regions (UTRs) and in the vicinity of start codons. Requires molecular oxygen, alpha-ketoglutarate and iron. The chain is Alpha-ketoglutarate-dependent dioxygenase alkB homolog 3 from Bos taurus (Bovine).